The following is a 494-amino-acid chain: DnaJ homolog subfamily C member 7 (494 aa).

A2 is subject to N-acetylalanine. TPR repeat units lie at residues 28-61, 62-95, 96-129, 142-175, 210-243, 256-289, 294-327, and 328-361; these read AESFKEQGNAYYAKKDYNEAYNYYTKAIDMCPNN, ASYYGNRAATLMMLGRFREALGDAQQSVRLDDSF, VRGHLREGKCHLSLGNAMAACRSFQRALELDHKN, VMEYEKIAEVDFEKRDFRKVVFCMDRALEFAPAC, ADALYVRGLCLYYEDCIEKAVQFFVQALRMAPDH, LKAKKEDGNKAFKEGNYKLAYELYTEALGIDPNN, AKLYCNRGTVNSKLRQLEDAIEDCTNAVKLDDTY, and IKAYLRRAQCYMDTEQFEEAVRDYEKVYQTEKTK. Residues 381-451 form the J domain; that stretch reads DYYKILGVDK…KKKTRYDSGQ (71 aa). S393 carries the phosphoserine modification.

Associates with complexes containing chaperones HSP70 and HSP90. Interacts with the GAP domain of NF1. Interacts with HSP90AA1. Interacts with HSPA1A/B; the interaction is enhanced by ATP. Interacts with HSP90AB1. Interacts with PGR. Interacts with RAD9A; the interaction is interrupted by UV and heat shock treatments. Interacts with HUS1 and RAD1. Interacts with NR1I3; this complex may also include HSP90 Interacts with HSPA8. Widely expressed with high levels in liver, skeletal muscle, kidney and testis.

The protein localises to the cytoplasm. It is found in the nucleus. It localises to the cytoskeleton. Acts as a co-chaperone regulating the molecular chaperones HSP70 and HSP90 in folding of steroid receptors, such as the glucocorticoid receptor and the progesterone receptor. Proposed to act as a recycling chaperone by facilitating the return of chaperone substrates to early stages of chaperoning if further folding is required. In vitro, induces ATP-independent dissociation of HSP90 but not of HSP70 from the chaperone-substrate complexes. Recruits NR1I3 to the cytoplasm. This is DnaJ homolog subfamily C member 7 (Dnajc7) from Mus musculus (Mouse).